A 140-amino-acid chain; its full sequence is 3-hydroxyacyl-[acyl-carrier-protein] dehydratase FabZ (140 aa).

His47 is an active-site residue.

This sequence belongs to the thioester dehydratase family. FabZ subfamily.

The protein resides in the cytoplasm. It carries out the reaction a (3R)-hydroxyacyl-[ACP] = a (2E)-enoyl-[ACP] + H2O. Its function is as follows. Involved in unsaturated fatty acids biosynthesis. Catalyzes the dehydration of short chain beta-hydroxyacyl-ACPs and long chain saturated and unsaturated beta-hydroxyacyl-ACPs. The protein is 3-hydroxyacyl-[acyl-carrier-protein] dehydratase FabZ of Streptococcus pneumoniae (strain CGSP14).